Reading from the N-terminus, the 411-residue chain is POU domain, class 4, transcription factor 2 (411 aa).

The interval 29 to 95 is disordered; sequence LHSASPGSSA…SEAMRRACLP (67 aa). Residues 31–52 are compositionally biased toward low complexity; sequence SASPGSSAPAAPSASSPSSSSN. Gly residues-rich tracts occupy residues 53-68 and 76-86; these read AGGG…GGGR and GSGGSGGGGGS. The interval 93–239 is required for transcriptional activation; it reads CLPTPPSNIF…MHQAALSMAH (147 aa). Residues 112 to 121 carry the POU-IV box motif; it reads RAEALAAVDI. Positions 154–168 are enriched in low complexity; sequence SAASSSSVPISHPSA. The tract at residues 154 to 190 is disordered; it reads SAASSSSVPISHPSALAGTHHHHHHHHHHHHQPHQAL. Basic residues predominate over residues 172–186; the sequence is THHHHHHHHHHHHQP. The Nuclear speckle targeting signal motif lies at 173-187; it reads HHHHHHHHHHHHQPH. The segment at 240–411 is required for DNA-binding and transcriptional repression; it reads AHGLPSHMGC…QKRMKYSAGI (172 aa). The 78-residue stretch at 252–329 folds into the POU-specific domain; sequence DVDADPRDLE…ILQAWLEEAE (78 aa). Residues 347 to 406 constitute a DNA-binding region (homeobox); it reads KKRKRTSIAAPEKRSLEAYFAIQPRPSSEKIAAIAEKLDLKKNVVRVWFCNQRQKQKRMK.

The protein belongs to the POU transcription factor family. Class-4 subfamily. In terms of assembly, isoform 2: Interacts with POU4F1 isoform 1; this interaction inhibits both POU4F1 DNA-binding and transcriptional activities. Isoform 2: Interacts (C-terminus) with ESR1 (via DNA-binding domain); this interaction increases the estrogen receptor ESR1 transcriptional activity in a DNA- and ligand 17-beta-estradiol-independent manner. Isoform 2: Interacts (via C-terminus) with TP53 (via N-terminus). Interacts with DLX1 (via homeobox DNA-binding domain); this interaction suppresses DLX1-mediated transcriptional activity in postnatal retina enhancing retinal ganglion cell (RGC) differentiation. Interacts with DLX2 (via homeobox DNA-binding domain); this interaction enhances RGC differentiation. Isoform 1: Interacts (via C-terminus) with ISL1 (via C-terminus). Isoform 1: Interacts with ISL2. Isoform 1: Interacts with LHX2. Expressed in retinal ganglion cells (RGCs). Expressed in mature osteoclasts. Expressed in cells of layers of the superior colliculus and the adjacent periaqueductal gray (at protein level). Expressed in the brain, peripheral sensory nervous system and retina. Expressed in the optical, intermediate, and deep gray areas of the superior colliculus, the dorsal column of the mesencephalic and pontine central gray, and the lateral interpeduncular nucleus of the brain. Expressed predominantly in postmitotic, terminally differentiated neurons. Expressed in ganglion cell layer (GCL) of the retina.

It localises to the nucleus. The protein resides in the nucleus speckle. Its subcellular location is the cytoplasm. Functionally, tissue-specific DNA-binding transcription factor involved in the development and differentiation of target cells. Functions either as activator or repressor by modulating the rate of target gene transcription through RNA polymerase II enzyme in a promoter-dependent manner. Binds to the consensus octamer motif 5'-AT[A/T]A[T/A]T[A/T]A-3' of promoter of target genes. Plays a fundamental role in the gene regulatory network essential for retinal ganglion cell (RGC) differentiation. Binds to an octamer site to form a ternary complex with ISL1; cooperates positively with ISL1 and ISL2 to potentiate transcriptional activation of RGC target genes being involved in RGC fate commitment in the developing retina and RGC axon formation and pathfinding. Inhibits DLX1 and DLX2 transcriptional activities preventing DLX1- and DLX2-mediated ability to promote amacrine cell fate specification. In cooperation with TP53 potentiates transcriptional activation of BAX promoter activity increasing neuronal cell apoptosis. Negatively regulates BAX promoter activity in the absence of TP53. Acts as a transcriptional coactivator via its interaction with the transcription factor ESR1 by enhancing its effect on estrogen response element (ERE)-containing promoter. Antagonizes the transcriptional stimulatory activity of POU4F1 by preventing its binding to an octamer motif. Involved in TNFSF11-mediated terminal osteoclast differentiation. The chain is POU domain, class 4, transcription factor 2 from Mus musculus (Mouse).